A 268-amino-acid polypeptide reads, in one-letter code: 4-hydroxy-tetrahydrodipicolinate reductase (268 aa).

Residues 8 to 13 and Glu-34 contribute to the NAD(+) site; that span reads GGGGKM. Residue Lys-35 coordinates NADP(+). Residues 98–100 and 122–125 contribute to the NAD(+) site; these read GST and APNM. His-155 (proton donor/acceptor) is an active-site residue. His-156 contacts (S)-2,3,4,5-tetrahydrodipicolinate. Residue Lys-159 is the Proton donor of the active site. A (S)-2,3,4,5-tetrahydrodipicolinate-binding site is contributed by 165–166; it reads GT.

It belongs to the DapB family.

The protein localises to the cytoplasm. The catalysed reaction is (S)-2,3,4,5-tetrahydrodipicolinate + NAD(+) + H2O = (2S,4S)-4-hydroxy-2,3,4,5-tetrahydrodipicolinate + NADH + H(+). It carries out the reaction (S)-2,3,4,5-tetrahydrodipicolinate + NADP(+) + H2O = (2S,4S)-4-hydroxy-2,3,4,5-tetrahydrodipicolinate + NADPH + H(+). Its pathway is amino-acid biosynthesis; L-lysine biosynthesis via DAP pathway; (S)-tetrahydrodipicolinate from L-aspartate: step 4/4. Catalyzes the conversion of 4-hydroxy-tetrahydrodipicolinate (HTPA) to tetrahydrodipicolinate. This Syntrophus aciditrophicus (strain SB) protein is 4-hydroxy-tetrahydrodipicolinate reductase.